The chain runs to 110 residues: Large ribosomal subunit protein uL22 (110 aa).

This sequence belongs to the universal ribosomal protein uL22 family. As to quaternary structure, part of the 50S ribosomal subunit.

This protein binds specifically to 23S rRNA; its binding is stimulated by other ribosomal proteins, e.g. L4, L17, and L20. It is important during the early stages of 50S assembly. It makes multiple contacts with different domains of the 23S rRNA in the assembled 50S subunit and ribosome. Functionally, the globular domain of the protein is located near the polypeptide exit tunnel on the outside of the subunit, while an extended beta-hairpin is found that lines the wall of the exit tunnel in the center of the 70S ribosome. The chain is Large ribosomal subunit protein uL22 from Shewanella amazonensis (strain ATCC BAA-1098 / SB2B).